The chain runs to 290 residues: Mitochondrial dicarboxylate carrier (290 aa).

3 Solcar repeats span residues 6-90 (TKRL…VKKQ), 101-188 (QKAL…IKQT), and 197-281 (DNLQ…LRLK). 3 consecutive transmembrane segments (helical) span residues 12–32 (WYFGGVAGAMAACCTHPLDLL), 65–84 (GVSASVLRQLTYSTTRFGIY), and 103–123 (ALLAGFAGACGGMVGTPGDLV). N6-acetyllysine is present on Lys-159. 3 helical membrane-spanning segments follow: residues 163–182 (GATMATSRAILMTIGQLSFY), 203–223 (FASSISAASVATVMTQPLDVM), and 256–276 (GFIPAWARLAPHTVLTFIFFE).

This sequence belongs to the mitochondrial carrier (TC 2.A.29) family.

The protein localises to the mitochondrion inner membrane. The enzyme catalyses (S)-malate(in) + phosphate(out) = (S)-malate(out) + phosphate(in). It catalyses the reaction malonate(out) + (S)-malate(in) = malonate(in) + (S)-malate(out). It carries out the reaction (S)-malate(in) + succinate(out) = (S)-malate(out) + succinate(in). The catalysed reaction is (S)-malate(in) + sulfate(out) = (S)-malate(out) + sulfate(in). The enzyme catalyses 2 thiosulfate(out) + (S)-malate(in) = 2 thiosulfate(in) + (S)-malate(out). It catalyses the reaction malonate(out) + phosphate(in) = malonate(in) + phosphate(out). It carries out the reaction succinate(out) + phosphate(in) = succinate(in) + phosphate(out). The catalysed reaction is sulfate(out) + phosphate(in) = sulfate(in) + phosphate(out). The enzyme catalyses 2 thiosulfate(out) + phosphate(in) = 2 thiosulfate(in) + phosphate(out). It catalyses the reaction malonate(out) + succinate(in) = malonate(in) + succinate(out). Functionally, catalyzes the electroneutral exchange or flux of physiologically important metabolites such as dicarboxylates (malonate, malate, succinate), inorganic sulfur-containing anions, and phosphate, across mitochondrial inner membrane. Plays an important role in gluconeogenesis, fatty acid metabolism, urea synthesis, and sulfur metabolism, by supplying the substrates for the different metabolic processes. The polypeptide is Mitochondrial dicarboxylate carrier (Caenorhabditis elegans).